A 780-amino-acid chain; its full sequence is Lon protease (780 aa).

One can recognise a Lon N-terminal domain in the interval 11–204; it reads IPVLPLRDVV…RLMAIMESEI (194 aa). 356–363 is a binding site for ATP; the sequence is GPPGVGKT. In terms of domain architecture, Lon proteolytic spans 592 to 773; that stretch reads KNQIGQVIGL…KEVLNLSLEN (182 aa). Residues Ser-679 and Lys-722 contribute to the active site.

It belongs to the peptidase S16 family. Homohexamer. Organized in a ring with a central cavity.

It localises to the cytoplasm. It catalyses the reaction Hydrolysis of proteins in presence of ATP.. Functionally, ATP-dependent serine protease that mediates the selective degradation of mutant and abnormal proteins as well as certain short-lived regulatory proteins. Required for cellular homeostasis and for survival from DNA damage and developmental changes induced by stress. Degrades polypeptides processively to yield small peptide fragments that are 5 to 10 amino acids long. Binds to DNA in a double-stranded, site-specific manner. This chain is Lon protease, found in Buchnera aphidicola subsp. Baizongia pistaciae (strain Bp).